Here is a 243-residue protein sequence, read N- to C-terminus: MSAVKSALGDMVITFLWVILSATFGIQTAAIVSAVGFHGITWAPLVISTLVVFVSISIFTVIGNVLGGASFNPCGNAAFYTAGVSSDSLFSLAIRSPAQAIGAAGGAITIMEMIPEKYKTRIGGKPSLQFGAHNGAISEVVLSFSVTFLVLLIILRGPRKLLAKTFLLALATVSVFVVGSKFTRPFMNPAIAFGWAYIYKSHNTWDHFYVYWISSYTGAILSAMLFRIIFPAPPLVQKKQKKA.

Helical transmembrane passes span 12-32 and 42-62; these read VITF…AAIV and WAPL…FTVI. The short motif at 72–74 is the NPA 1 element; sequence NPC. The next 3 helical transmembrane spans lie at 90 to 110, 135 to 155, and 162 to 182; these read FSLA…AITI, GAIS…LIIL, and LAKT…GSKF. Residues 188-190 carry the NPA 2 motif; sequence NPA. The helical transmembrane segment at 210–230 threads the bilayer; that stretch reads VYWISSYTGAILSAMLFRIIF.

The protein belongs to the MIP/aquaporin (TC 1.A.8) family. SIP (TC 1.A.8.10) subfamily. Expressed in roots and above ground. Expressed in elongating regions of the root tips, cotyledons, minor veins and hydathode cells of the rosette leaves. Weakly expressed in vascular tissues of the flower petals, filaments of stamens, upper part of the styles and receptacles of the siliques.

It localises to the endoplasmic reticulum membrane. Water channel required to facilitate the transport of water across cell membrane. This Arabidopsis thaliana (Mouse-ear cress) protein is Probable aquaporin SIP1-2 (SIP1-2).